A 475-amino-acid chain; its full sequence is Ammonium transporter 2 (475 aa).

Helical transmembrane passes span 27 to 47, 55 to 75, 120 to 140, 148 to 168, 183 to 203, 218 to 238, 254 to 274, 279 to 299, 302 to 322, 336 to 356, and 389 to 409; these read AATL…ASIV, SAFM…LLCY, LVYF…GSVL, WMAF…YSIW, GGYV…YWVG, VLLM…FNGG, TNLS…IFFG, IGAI…AGLI, WAAI…MMII, LAVF…TGLF, and AGAA…LLAI.

This sequence belongs to the ammonia transporter channel (TC 1.A.11.2) family. Higher expression in shoots than roots.

The protein resides in the cell membrane. High affinity ammonium transporter that may play an important role in moving ammonium between the apoplast and symplast of cells throughout the plant. Does not transport methylammonium. In Arabidopsis thaliana (Mouse-ear cress), this protein is Ammonium transporter 2 (AMT2).